Reading from the N-terminus, the 180-residue chain is ATP synthase subunit delta (180 aa).

It belongs to the ATPase delta chain family. F-type ATPases have 2 components, F(1) - the catalytic core - and F(0) - the membrane proton channel. F(1) has five subunits: alpha(3), beta(3), gamma(1), delta(1), epsilon(1). F(0) has three main subunits: a(1), b(2) and c(10-14). The alpha and beta chains form an alternating ring which encloses part of the gamma chain. F(1) is attached to F(0) by a central stalk formed by the gamma and epsilon chains, while a peripheral stalk is formed by the delta and b chains.

It is found in the cell inner membrane. In terms of biological role, f(1)F(0) ATP synthase produces ATP from ADP in the presence of a proton or sodium gradient. F-type ATPases consist of two structural domains, F(1) containing the extramembraneous catalytic core and F(0) containing the membrane proton channel, linked together by a central stalk and a peripheral stalk. During catalysis, ATP synthesis in the catalytic domain of F(1) is coupled via a rotary mechanism of the central stalk subunits to proton translocation. Its function is as follows. This protein is part of the stalk that links CF(0) to CF(1). It either transmits conformational changes from CF(0) to CF(1) or is implicated in proton conduction. This is ATP synthase subunit delta from Legionella pneumophila subsp. pneumophila (strain Philadelphia 1 / ATCC 33152 / DSM 7513).